The following is a 262-amino-acid chain: Ribosomal RNA small subunit methyltransferase A (262 aa).

S-adenosyl-L-methionine is bound by residues Asn20, Leu22, Gly47, Glu68, Asp90, and Asn110.

This sequence belongs to the class I-like SAM-binding methyltransferase superfamily. rRNA adenine N(6)-methyltransferase family. RsmA subfamily.

The protein resides in the cytoplasm. The catalysed reaction is adenosine(1518)/adenosine(1519) in 16S rRNA + 4 S-adenosyl-L-methionine = N(6)-dimethyladenosine(1518)/N(6)-dimethyladenosine(1519) in 16S rRNA + 4 S-adenosyl-L-homocysteine + 4 H(+). Specifically dimethylates two adjacent adenosines (A1518 and A1519) in the loop of a conserved hairpin near the 3'-end of 16S rRNA in the 30S particle. May play a critical role in biogenesis of 30S subunits. The chain is Ribosomal RNA small subunit methyltransferase A from Chlorobium phaeobacteroides (strain BS1).